A 158-amino-acid chain; its full sequence is 6,7-dimethyl-8-ribityllumazine synthase (158 aa).

Residues Phe22, 57-59, and 81-83 contribute to the 5-amino-6-(D-ribitylamino)uracil site; these read AVE and AVI. Position 86–87 (86–87) interacts with (2S)-2-hydroxy-3-oxobutyl phosphate; it reads GT. His89 (proton donor) is an active-site residue. Phe114 is a binding site for 5-amino-6-(D-ribitylamino)uracil. Arg128 lines the (2S)-2-hydroxy-3-oxobutyl phosphate pocket.

It belongs to the DMRL synthase family. In terms of assembly, forms an icosahedral capsid composed of 60 subunits, arranged as a dodecamer of pentamers.

It carries out the reaction (2S)-2-hydroxy-3-oxobutyl phosphate + 5-amino-6-(D-ribitylamino)uracil = 6,7-dimethyl-8-(1-D-ribityl)lumazine + phosphate + 2 H2O + H(+). The protein operates within cofactor biosynthesis; riboflavin biosynthesis; riboflavin from 2-hydroxy-3-oxobutyl phosphate and 5-amino-6-(D-ribitylamino)uracil: step 1/2. In terms of biological role, catalyzes the formation of 6,7-dimethyl-8-ribityllumazine by condensation of 5-amino-6-(D-ribitylamino)uracil with 3,4-dihydroxy-2-butanone 4-phosphate. This is the penultimate step in the biosynthesis of riboflavin. The sequence is that of 6,7-dimethyl-8-ribityllumazine synthase from Shewanella oneidensis (strain ATCC 700550 / JCM 31522 / CIP 106686 / LMG 19005 / NCIMB 14063 / MR-1).